The chain runs to 349 residues: tRNA pseudouridine synthase D (349 aa).

Residue phenylalanine 27 coordinates substrate. Aspartate 80 serves as the catalytic Nucleophile. Substrate is bound at residue asparagine 129. The TRUD domain occupies 155-303; the sequence is GVPNYFGAQR…VEAARRAMLL (149 aa). A substrate-binding site is contributed by phenylalanine 329.

The protein belongs to the pseudouridine synthase TruD family.

The catalysed reaction is uridine(13) in tRNA = pseudouridine(13) in tRNA. Its function is as follows. Responsible for synthesis of pseudouridine from uracil-13 in transfer RNAs. The polypeptide is tRNA pseudouridine synthase D (Shigella boydii serotype 18 (strain CDC 3083-94 / BS512)).